A 281-amino-acid chain; its full sequence is Transcription factor lfc1 (281 aa).

Positions 60 to 87 form a DNA-binding region, zn(2)-C6 fungal-type; it reads CLTCRMKKIKCDETKPTCARCTHGQREC.

The protein localises to the nucleus. Transcription factor that acts as a negative regulator of basidioma development via repressing the expression of genes involved in basidioma development, including hydrophobins such as Hyd-1 and Hyd-8, lectins such as JRL1, as well as the fruiting body differentiation gene FVFD16. The sequence is that of Transcription factor lfc1 from Flammulina velutipes (Agaricus velutipes).